We begin with the raw amino-acid sequence, 623 residues long: UvrABC system protein C (623 aa).

A GIY-YIG domain is found at 12–91 (PSPGVYLMKS…IKQHRPKYNI (80 aa)). The UVR domain maps to 201–236 (TEVARLYRSKMNLAAEQMRYEDAARYRDLLRAIEVT). Residues 603–623 (RLHGSPLPNPPPPGEGAMDRK) are disordered.

This sequence belongs to the UvrC family. As to quaternary structure, interacts with UvrB in an incision complex.

Its subcellular location is the cytoplasm. Its function is as follows. The UvrABC repair system catalyzes the recognition and processing of DNA lesions. UvrC both incises the 5' and 3' sides of the lesion. The N-terminal half is responsible for the 3' incision and the C-terminal half is responsible for the 5' incision. In Citrifermentans bemidjiense (strain ATCC BAA-1014 / DSM 16622 / JCM 12645 / Bem) (Geobacter bemidjiensis), this protein is UvrABC system protein C.